The primary structure comprises 244 residues: DNA repair protein RecO (244 aa).

The protein belongs to the RecO family.

Functionally, involved in DNA repair and RecF pathway recombination. This chain is DNA repair protein RecO, found in Polynucleobacter asymbioticus (strain DSM 18221 / CIP 109841 / QLW-P1DMWA-1) (Polynucleobacter necessarius subsp. asymbioticus).